A 190-amino-acid chain; its full sequence is MTYKLRPNQVIKKLGGRIIYLVGMMGSGKSTTGPHLAKLLKYSFIDQDELIEKVAKSSVSQIFREEGENGFRDIETQVLKQIGQRHSLVVATGGGLVTRSENWGVLHQGIVIWLDPNRELLFARLKSDKTVVRPLLDNKDPKDVLDSLIKQRYLSYAEADLHISIERETPEEVALVIFKKLSEIIRVQED.

Residue 26-31 (GSGKST) coordinates ATP. Ser-30 contacts Mg(2+). Asp-48, Arg-72, and Gly-94 together coordinate substrate. Arg-133 lines the ATP pocket. Arg-152 contributes to the substrate binding site.

It belongs to the shikimate kinase family. In terms of assembly, monomer. Mg(2+) is required as a cofactor.

It localises to the cytoplasm. It carries out the reaction shikimate + ATP = 3-phosphoshikimate + ADP + H(+). The protein operates within metabolic intermediate biosynthesis; chorismate biosynthesis; chorismate from D-erythrose 4-phosphate and phosphoenolpyruvate: step 5/7. Catalyzes the specific phosphorylation of the 3-hydroxyl group of shikimic acid using ATP as a cosubstrate. The sequence is that of Shikimate kinase from Prochlorococcus marinus (strain SARG / CCMP1375 / SS120).